We begin with the raw amino-acid sequence, 230 residues long: ATP-dependent dethiobiotin synthetase BioD (230 aa).

12-17 (DVGKTV) contacts ATP. A Mg(2+)-binding site is contributed by Thr16. Lys37 is an active-site residue. Thr41 provides a ligand contact to substrate. ATP is bound by residues Asp49, 108–111 (EGAG), 168–169 (GS), and 198–200 (PEG). The Mg(2+) site is built by Asp49 and Glu108.

It belongs to the dethiobiotin synthetase family. As to quaternary structure, homodimer. Requires Mg(2+) as cofactor.

It localises to the cytoplasm. The enzyme catalyses (7R,8S)-7,8-diammoniononanoate + CO2 + ATP = (4R,5S)-dethiobiotin + ADP + phosphate + 3 H(+). The protein operates within cofactor biosynthesis; biotin biosynthesis; biotin from 7,8-diaminononanoate: step 1/2. Functionally, catalyzes a mechanistically unusual reaction, the ATP-dependent insertion of CO2 between the N7 and N8 nitrogen atoms of 7,8-diaminopelargonic acid (DAPA, also called 7,8-diammoniononanoate) to form a ureido ring. This is ATP-dependent dethiobiotin synthetase BioD from Corynebacterium kroppenstedtii (strain DSM 44385 / JCM 11950 / CIP 105744 / CCUG 35717).